The chain runs to 211 residues: Regulator of G-protein signaling 2 (211 aa).

The segment at 32–66 (KMKRTLLKDWKTRLSYFLQNSSAPGKPKTGKKSKQ) is necessary for membrane association. Positions 79-116 (LWAEAFDELLASKYGLAAFRAFLKSEFCEENIEFWLAC) are necessary to inhibit protein synthesis. One can recognise an RGS domain in the interval 83–199 (AFDELLASKY…LESEFYQDLC (117 aa)).

As to quaternary structure, interacts with GNAQ. Does not interact with GNAI1 and GNAI3. Interacts with EIF2B5. Interacts with PRKG1 (isoform alpha). Phosphorylated by protein kinase C. Phosphorylation by PRKG1 leads to activation of RGS2 activity. In terms of tissue distribution, expressed in a wide variety of tissues.

It is found in the cell membrane. The protein resides in the cytoplasm. The protein localises to the nucleus. Its subcellular location is the nucleolus. Its function is as follows. Regulates G protein-coupled receptor signaling cascades. Inhibits signal transduction by increasing the GTPase activity of G protein alpha subunits, thereby driving them into their inactive GDP-bound form. It is involved in the negative regulation of the angiotensin-activated signaling pathway. Plays a role in the regulation of blood pressure in response to signaling via G protein-coupled receptors and GNAQ. Plays a role in regulating the constriction and relaxation of vascular smooth muscle. Binds EIF2B5 and blocks its activity, thereby inhibiting the translation of mRNA into protein. This chain is Regulator of G-protein signaling 2 (Rgs2), found in Mus musculus (Mouse).